Consider the following 971-residue polypeptide: Xylanolytic transcriptional activator xlnR (971 aa).

Disordered stretches follow at residues 1 to 25 (MSTT…PVGM) and 55 to 123 (GASA…PVRR). Low complexity predominate over residues 9-18 (FTSSFSPFSS). Over residues 67–96 (LRSSISKPQGQQLYSDESSAQHTQNATTGF) the composition is skewed to polar residues. Positions 129 to 155 (CDQCNQLRTKCDGQNPCAHCIEFGLTC) form a DNA-binding region, zn(2)-C6 fungal-type. 3 stretches are compositionally biased toward polar residues: residues 182–199 (NGTA…SVSS), 227–241 (NLAT…QHSD), and 249–260 (QGSQQTPHSQPS). Disordered stretches follow at residues 182–263 (NGTA…SLGG), 295–316 (LHPS…GMNS), and 580–610 (RELP…NLPP).

The protein belongs to the xlnR/xlr1 family.

Its subcellular location is the nucleus. Transcriptional activator of the xylanolytic system. Involved in the regulation of extracellular cellulolytic and xylanolytic genes and in the regulation of the intracellular activities of D-xylose catabolic genes in the pentose catabolic pathway (PCP) in response to the presence of D-xylose. This chain is Xylanolytic transcriptional activator xlnR (xlnR), found in Aspergillus flavus (strain ATCC 200026 / FGSC A1120 / IAM 13836 / NRRL 3357 / JCM 12722 / SRRC 167).